The sequence spans 517 residues: AAA ATPase forming ring-shaped complexes (517 aa).

The stretch at 25–53 forms a coiled coil; the sequence is ARNAKLVELLQASRTKLEEINGRLEALAE. Position 233–238 (233–238) interacts with ATP; the sequence is GNGKTL.

The protein belongs to the AAA ATPase family. In terms of assembly, homohexamer. Assembles into a hexameric ring structure.

The polypeptide is AAA ATPase forming ring-shaped complexes (Corynebacterium jeikeium (strain K411)).